The following is a 398-amino-acid chain: GATA transcription factor 21 (398 aa).

Residues 20-51 (QPFFYPLGSSSSLHHHHHHHHHQVPSNSSSSS) form a disordered region. The span at 32–42 (LHHHHHHHHHQ) shows a compositional bias: basic residues. The Nuclear localization signal motif lies at 109–116 (PKKETRLK). The interval 122–144 (KDHEDQPHPLHQNPTKPDSDSDK) is disordered. A GATA-type zinc finger spans residues 226-280 (NGVIRVCSDCNTTKTPLWRSGPRGPKSLCNACGIRQRKARRAAMAAAAAAGDQEV). The interval 289 to 353 (LPLKKKLQNK…KSTTSSNSSI (65 aa)) is disordered. The segment covering 291–302 (LKKKLQNKKKRS) has biased composition (basic residues). Residues 343–353 (SKSTTSSNSSI) show a composition bias toward low complexity.

It belongs to the type IV zinc-finger family. Class B subfamily. Interacts with SNL1. Forms heterodimers with GATA18. Expressed predominantly in leaves, and barely in stems, flowers and siliques.

It localises to the nucleus. In terms of biological role, transcriptional regulator that specifically binds 5'-GATA-3' or 5'-GAT-3' motifs within gene promoters. Involved in the modulation of chloroplast development, growth and division in a cytokinin-dependent manner. Repressor of the gibberellic acid (GA) signaling pathway that represses flowering and modulates greening, in a SOC1-dependent manner. Prevents the accumulation of SOC1 during flowering. Promotes chlorophyll biosynthesis throughout the plant, by regulating chlorophyll biosynthetic genes (e.g. HEMA1 and GUN4) and chloroplast localized glutamate synthase (e.g. GLU1). Involved in the regulation of sugar-sensing genes (e.g. HXK1, HXK2, STP13 and PLT6). Regulator of germination, senescence, elongation growth and flowering time. Also influences leaf starch content. This is GATA transcription factor 21 from Arabidopsis thaliana (Mouse-ear cress).